The sequence spans 458 residues: tRNA modification GTPase MnmE (458 aa).

Positions 26, 88, and 127 each coordinate (6S)-5-formyl-5,6,7,8-tetrahydrofolate. Residues 224–378 (GLSTAIIGRP…IEERINDIFF (155 aa)) form the TrmE-type G domain. Asn234 provides a ligand contact to K(+). Residues 234 to 239 (NVGKSS), 253 to 259 (TDIEGTT), and 278 to 281 (DTAG) contribute to the GTP site. Mg(2+) is bound at residue Ser238. Positions 253, 255, and 258 each coordinate K(+). Residue Thr259 participates in Mg(2+) binding. Position 458 (Lys458) interacts with (6S)-5-formyl-5,6,7,8-tetrahydrofolate.

The protein belongs to the TRAFAC class TrmE-Era-EngA-EngB-Septin-like GTPase superfamily. TrmE GTPase family. As to quaternary structure, homodimer. Heterotetramer of two MnmE and two MnmG subunits. Requires K(+) as cofactor.

The protein localises to the cytoplasm. Its function is as follows. Exhibits a very high intrinsic GTPase hydrolysis rate. Involved in the addition of a carboxymethylaminomethyl (cmnm) group at the wobble position (U34) of certain tRNAs, forming tRNA-cmnm(5)s(2)U34. This Streptococcus agalactiae serotype III (strain NEM316) protein is tRNA modification GTPase MnmE.